The sequence spans 221 residues: NEDD8 ultimate buster 1 (221 aa).

UBA domains are found at residues 1 to 19 (LGLR…HIAN), 30 to 76 (EERE…LLHN), and 95 to 135 (SPSQ…LVHN). The tract at residues 136–193 (GGRLPPDLQLSAEDSSSTPSTSPSDSAGTSSASTDEDMETEAVNEILEDIPEHEEDYL) is disordered. The span at 146–168 (SAEDSSSTPSTSPSDSAGTSSAS) shows a compositional bias: low complexity. The segment covering 169–193 (TDEDMETEAVNEILEDIPEHEEDYL) has biased composition (acidic residues).

As to quaternary structure, directly interacts with NEDD8 and PSMD4/S5a, a member of the regulatory subunit of the 26S proteasome. Interacts with AIPL1.

It is found in the nucleus. Its function is as follows. Specific down-regulator of the NEDD8 conjugation system. Recruits NEDD8 and its conjugates to the proteasome for degradation. The polypeptide is NEDD8 ultimate buster 1 (NUB1) (Bos taurus (Bovine)).